A 162-amino-acid chain; its full sequence is Caveolin-2 (162 aa).

The Cytoplasmic portion of the chain corresponds to 1–86 (MGLETEKADV…FEISKYVMYK (86 aa)). Tyr19 bears the Phosphotyrosine; by SRC mark. Ser20 and Ser23 each carry phosphoserine. Residue Tyr27 is modified to Phosphotyrosine. Ser36 carries the post-translational modification Phosphoserine. Positions 87–107 (FLTVFLAIPLAFIAGILFATL) form an intramembrane region, helical. The Cytoplasmic portion of the chain corresponds to 108-162 (SCLHIWILMPFVKTCLMVLPSVQTIWKSVTDVVIGPLCTSVGRSFSSVSMQLSHD).

This sequence belongs to the caveolin family. Monomer or homodimer. Interacts with CAV1; the interaction forms a stable heterooligomeric complex that is required for targeting to lipid rafts and for caveolae formation. Tyrosine phosphorylated forms do not form heterooligomers with the Tyr-19-phosphorylated form existing as a monomer or dimer, and the Tyr-27-form as a monomer only. Interacts (tyrosine phosphorylated form) with the SH2 domain-containing proteins, RASA1, NCK1 and SRC. Interacts (tyrosine phosphorylated form) with INSR, the interaction (Tyr-27-phosphorylated form) is increased on insulin stimulation. Interacts (Tyr-19 phosphorylated form) with MAPK1 (phosphorylated form); the interaction, promoted by insulin, leads to nuclear location and MAPK1 activation. Interacts with STAT3; the interaction is increased on insulin-induced tyrosine phosphorylation leading to STAT activation. Post-translationally, phosphorylated on serine and tyrosine residues. CAV1 promotes phosphorylation on Ser-23 which then targets the complex to the plasma membrane, lipid rafts and caveolae. Phosphorylation on Ser-36 appears to modulate mitosis in endothelial cells. Phosphorylation on both Tyr-19 and Tyr-27 is required for insulin-induced 'Ser-727' phosphorylation of STAT3 and its activation. Phosphorylation on Tyr-19 is required for insulin-induced phosphorylation of MAPK1 and DNA binding of STAT3. Tyrosine phosphorylation is induced by both EGF and insulin.

Its subcellular location is the nucleus. It localises to the cytoplasm. It is found in the golgi apparatus membrane. The protein localises to the cell membrane. The protein resides in the membrane. Its subcellular location is the caveola. In terms of biological role, may act as a scaffolding protein within caveolar membranes. Interacts directly with G-protein alpha subunits and can functionally regulate their activity. Acts as an accessory protein in conjunction with CAV1 in targeting to lipid rafts and driving caveolae formation. The Ser-36 phosphorylated form has a role in modulating mitosis in endothelial cells. Positive regulator of cellular mitogenesis of the MAPK signaling pathway. Required for the insulin-stimulated nuclear translocation and activation of MAPK1 and STAT3, and the subsequent regulation of cell cycle progression. In Mus musculus (Mouse), this protein is Caveolin-2 (Cav2).